Reading from the N-terminus, the 498-residue chain is COP9 signalosome complex subunit 1 (498 aa).

Residues 249–430 form the PCI domain; it reads SYLEAANSFI…HVLVSTQGDK (182 aa).

Belongs to the CSN1 family. In terms of assembly, component of the COP9 signalosome (CSN) complex.

Its subcellular location is the cytoplasm. The protein resides in the nucleus. Its function is as follows. Component of the COP9 signalosome (CSN) complex that acts as an regulator of the ubiquitin (Ubl) conjugation pathway by mediating the deneddylation of the cullin subunit of SCF-type E3 ubiquitin-protein ligase complexes. The CSN complex seems to link protein degradation to sexual development. Required for fruit body formation. The protein is COP9 signalosome complex subunit 1 (csnA) of Emericella nidulans (strain FGSC A4 / ATCC 38163 / CBS 112.46 / NRRL 194 / M139) (Aspergillus nidulans).